We begin with the raw amino-acid sequence, 235 residues long: Pyridoxine/pyridoxamine 5'-phosphate oxidase (235 aa).

Substrate is bound by residues 30–33 (RQEY) and K88. FMN is bound by residues 83–88 (RTVLLK), 98–99 (YT), R104, K105, and Q127. The substrate site is built by Y145, R149, and S153. FMN contacts are provided by residues 162 to 163 (QS) and W207. 213–215 (RLH) provides a ligand contact to substrate. R217 is a binding site for FMN.

Belongs to the pyridoxamine 5'-phosphate oxidase family. Homodimer. Requires FMN as cofactor.

The catalysed reaction is pyridoxamine 5'-phosphate + O2 + H2O = pyridoxal 5'-phosphate + H2O2 + NH4(+). It carries out the reaction pyridoxine 5'-phosphate + O2 = pyridoxal 5'-phosphate + H2O2. It functions in the pathway cofactor metabolism; pyridoxal 5'-phosphate salvage; pyridoxal 5'-phosphate from pyridoxamine 5'-phosphate: step 1/1. The protein operates within cofactor metabolism; pyridoxal 5'-phosphate salvage; pyridoxal 5'-phosphate from pyridoxine 5'-phosphate: step 1/1. Its function is as follows. Catalyzes the oxidation of either pyridoxine 5'-phosphate (PNP) or pyridoxamine 5'-phosphate (PMP) into pyridoxal 5'-phosphate (PLP). This is Pyridoxine/pyridoxamine 5'-phosphate oxidase from Bacteroides fragilis (strain YCH46).